Reading from the N-terminus, the 159-residue chain is MPYTINSPSQFVYLSSAYADPVQLINLCTNALGNQFQTQQARTTVQQQFADAWKPVPSMTVRFPASDFYVYRYNSTLDPLITALLNSFDTRNRIIEVDNQPAPNTTEIVNATQRVDDATVAIRASINNLANELVRGTGMFNQAGFETASGLVWTTTPAT.

The protein belongs to the virgaviridae capsid protein family.

The protein localises to the virion. Functionally, capsid protein self-assembles to form rod-shaped virions about 18 nm in diameter with a central canal enclosing the viral genomic RNA. In Tobacco mild green mosaic virus (TMGMV), this protein is Capsid protein (CP).